A 543-amino-acid polypeptide reads, in one-letter code: Protein phosphatase 1G (543 aa).

Gly2 is lipidated: N-myristoyl glycine. Omega-N-methylarginine is present on Arg22. One can recognise a PPM-type phosphatase domain in the interval 26–503 (PYGFSAMQGW…DNMTCIIICF (478 aa)). Mn(2+) is bound by residues Asp60 and Gly61. Disordered regions lie at residues 116–139 (QIAGRPTEDEDEKEKVADEDDVDN) and 163–326 (NCHK…SDSG). Phosphothreonine is present on Thr122. A compositionally biased stretch (acidic residues) spans 123–139 (EDEDEKEKVADEDDVDN). Residue Ser183 is modified to Phosphoserine. Residues 259–310 (DSEDESDEAEEEEEDSEECSEEEDGYSSEEAENEEDEDDTEEAEEDDEEEEM) show a composition bias toward acidic residues. Position 381 is an N6-acetyllysine (Lys381). Residues Asp439 and Asp494 each contribute to the Mn(2+) site. The disordered stretch occupies residues 508-543 (TAAPQPESGKRKLEEVLSTEGAEENGNSDKKKAKRD). Ser525 bears the Phosphoserine mark.

This sequence belongs to the PP2C family. Interacts with NOL3; may dephosphorylate NOL3. Requires Mg(2+) as cofactor. It depends on Mn(2+) as a cofactor.

It is found in the cytoplasm. The protein localises to the membrane. It catalyses the reaction O-phospho-L-seryl-[protein] + H2O = L-seryl-[protein] + phosphate. It carries out the reaction O-phospho-L-threonyl-[protein] + H2O = L-threonyl-[protein] + phosphate. This Bos taurus (Bovine) protein is Protein phosphatase 1G (PPM1G).